The primary structure comprises 803 residues: Phenylalanine--tRNA ligase beta subunit (803 aa).

Positions 39–151 (SMKFSGIKIG…KNAIIGEDIK (113 aa)) constitute a tRNA-binding domain. Positions 406–482 (PKKILIKLYK…RFYGFEKIPI (77 aa)) constitute a B5 domain. Asp466 and Asp470 together coordinate Mg(2+). The 94-residue stretch at 707–800 (SDIPFNYRDI…LKKNFLIEIR (94 aa)) folds into the FDX-ACB domain.

This sequence belongs to the phenylalanyl-tRNA synthetase beta subunit family. Type 1 subfamily. In terms of assembly, tetramer of two alpha and two beta subunits. Requires Mg(2+) as cofactor.

The protein localises to the cytoplasm. It catalyses the reaction tRNA(Phe) + L-phenylalanine + ATP = L-phenylalanyl-tRNA(Phe) + AMP + diphosphate + H(+). This is Phenylalanine--tRNA ligase beta subunit from Wigglesworthia glossinidia brevipalpis.